Here is a 251-residue protein sequence, read N- to C-terminus: Isoprenyl transferase (251 aa).

Aspartate 31 is a catalytic residue. Aspartate 31 is a binding site for Mg(2+). Residues 32 to 35 (GNGR), tryptophan 36, arginine 44, histidine 48, and 76 to 78 (STE) contribute to the substrate site. Catalysis depends on asparagine 79, which acts as the Proton acceptor. Substrate-binding positions include tryptophan 80, arginine 82, arginine 199, and 205–207 (RIS). Glutamate 218 is a binding site for Mg(2+).

It belongs to the UPP synthase family. Homodimer. The cofactor is Mg(2+).

In terms of biological role, catalyzes the condensation of isopentenyl diphosphate (IPP) with allylic pyrophosphates generating different type of terpenoids. The chain is Isoprenyl transferase from Thermosynechococcus vestitus (strain NIES-2133 / IAM M-273 / BP-1).